Consider the following 161-residue polypeptide: Crossover junction endodeoxyribonuclease RuvC (161 aa).

Residues Asp7, Glu67, and Asp139 contribute to the active site. Residues Asp7, Glu67, and Asp139 each coordinate Mg(2+).

This sequence belongs to the RuvC family. In terms of assembly, homodimer which binds Holliday junction (HJ) DNA. The HJ becomes 2-fold symmetrical on binding to RuvC with unstacked arms; it has a different conformation from HJ DNA in complex with RuvA. In the full resolvosome a probable DNA-RuvA(4)-RuvB(12)-RuvC(2) complex forms which resolves the HJ. It depends on Mg(2+) as a cofactor.

It localises to the cytoplasm. The enzyme catalyses Endonucleolytic cleavage at a junction such as a reciprocal single-stranded crossover between two homologous DNA duplexes (Holliday junction).. The RuvA-RuvB-RuvC complex processes Holliday junction (HJ) DNA during genetic recombination and DNA repair. Endonuclease that resolves HJ intermediates. Cleaves cruciform DNA by making single-stranded nicks across the HJ at symmetrical positions within the homologous arms, yielding a 5'-phosphate and a 3'-hydroxyl group; requires a central core of homology in the junction. The consensus cleavage sequence is 5'-(A/T)TT(C/G)-3'. Cleavage occurs on the 3'-side of the TT dinucleotide at the point of strand exchange. HJ branch migration catalyzed by RuvA-RuvB allows RuvC to scan DNA until it finds its consensus sequence, where it cleaves and resolves the cruciform DNA. This Syntrophotalea carbinolica (strain DSM 2380 / NBRC 103641 / GraBd1) (Pelobacter carbinolicus) protein is Crossover junction endodeoxyribonuclease RuvC.